Consider the following 199-residue polypeptide: Dephospho-CoA kinase (199 aa).

Residues arginine 3 to threonine 199 enclose the DPCK domain. Residue glycine 11–threonine 16 participates in ATP binding.

This sequence belongs to the CoaE family.

It localises to the cytoplasm. It catalyses the reaction 3'-dephospho-CoA + ATP = ADP + CoA + H(+). Its pathway is cofactor biosynthesis; coenzyme A biosynthesis; CoA from (R)-pantothenate: step 5/5. Its function is as follows. Catalyzes the phosphorylation of the 3'-hydroxyl group of dephosphocoenzyme A to form coenzyme A. The protein is Dephospho-CoA kinase of Coxiella burnetii (strain RSA 493 / Nine Mile phase I).